Reading from the N-terminus, the 439-residue chain is MRLSRYFLPTLKENPAEAQIASHRLMLRAGMVRQTAAGIYAWLPLGLAVLRKIEGIVRDEQKRAGAIELLMPTLQSADLWRQSGRYDAYGPEMLRIVDRHERDMLYGPTNEEMITDIFRGAVRSYRDLPRNLFHIQWKFRDEIRPRFGVMRGREFLMKDGYSFDLDVEGARRAYRKMFVSYLRSFARMGLKAIPMAADTGPIGGDMSHEFIILAETGESAVFCHRDLVDMAVPGDDIDYETDLNPVIAARTDLYAATDEKHDAAKFDAEVPKDKQLSARGIEVGHIFFFGTKYSQSMGALVTGPDGKEVPVQMGSYGIGVSRLVGAIIEASHDDAGIVWPDAVAPFTVGLINLKSGDAETDAACESIYEKLTAQGIDVLYDDTDERAGAKFSNMDLIGLPWQLVIGPRGLKSGTVELKRRATGEKEELSPEAALAKIAG.

It belongs to the class-II aminoacyl-tRNA synthetase family. ProS type 2 subfamily. In terms of assembly, homodimer.

It localises to the cytoplasm. It catalyses the reaction tRNA(Pro) + L-proline + ATP = L-prolyl-tRNA(Pro) + AMP + diphosphate. Functionally, catalyzes the attachment of proline to tRNA(Pro) in a two-step reaction: proline is first activated by ATP to form Pro-AMP and then transferred to the acceptor end of tRNA(Pro). This Parvibaculum lavamentivorans (strain DS-1 / DSM 13023 / NCIMB 13966) protein is Proline--tRNA ligase.